Here is a 559-residue protein sequence, read N- to C-terminus: Nucleolar protein 12 (559 aa).

The segment at 24–194 is disordered; it reads ASSAGPVQAP…AGNESDIPVH (171 aa). Residues 44-56 are compositionally biased toward basic and acidic residues; the sequence is QKVREPAKPKVHL. Residues 57 to 110 are compositionally biased toward acidic residues; the sequence is EEDDEVLSEISEELSFEEDGPSDEDEDEDEDEENSEQEDGSGDEQEEEESEDVD. Basic and acidic residues predominate over residues 141-180; it reads NDNDDLEGKYLDKVAAEEEADRAGKRQKNDALTKTEKPAV. 2 RRM domains span residues 211-320 and 328-432; these read RTVF…SVAH and RCVF…RAKD. A disordered region spans residues 429 to 559; sequence RAKDPRKTAL…RASEWKKKKN (131 aa). Composition is skewed to basic and acidic residues over residues 516–532 and 550–559; these read EGRR…DLKQ and RASEWKKKKN.

This sequence belongs to the RRM RBM34 family.

The protein resides in the nucleus. The protein localises to the nucleolus. In terms of biological role, involved in pre-25S rRNA processing. The sequence is that of Nucleolar protein 12 (NOP12) from Gibberella zeae (strain ATCC MYA-4620 / CBS 123657 / FGSC 9075 / NRRL 31084 / PH-1) (Wheat head blight fungus).